The sequence spans 634 residues: MKSFKNKNTLRRKKAFPVFTKILLVSFLVWVLKCSNNCNNGNGSGDSFDFRNKRTLAQKQHEHHHHHHHQHQHQHQAPHQAHHHHHHGEVNHQAPQVHQQVHGQDQAHHHHHHHHHQLQPQQLQGTVANPPSNEPVVKTQVFREARPGGGFKAYEEKYESKHYKLKENVVDGKKDCDEKYEAANYAFSEECPYTVNDYSQENGPNIFALRKRFPLGMNDEDEEGKEALAIKDKLPGGLDEYQNQLYGICNETCTTCGPAAIDYVPADAPNGYAYGGSAHDGSHGNLRGHGNKGSEGYGYEAPYNPGFNGAPGSNGMQNYVPPHGAGYSAPYGVPHGAAHGSRYSSFSSVNKYGKHGDEKHHSSKKHEGNDGEGEKKKKSKKHKDHDGEKKKSKKHKDNEDAESVKSKKHKSHDCEKKKSKKHKDNEDAESVKSKKSVKEKGEKHNGKKPCSKKTNEENKNKEKTNNLKSDGSKAHEKKENETKNTAGENKKVDSTSADNKSTNAATPGAKDKTQGGKTDKTGASTNAATNKGQCAAEGATKGATKEASTSKEATKEASTSKGATKEASTTEGATKGASTTAGSTTGATTGANAVQSKDGTADKNAANNGEQVMSRGQAQLQEAGKKKKKRGCCG.

The signal sequence occupies residues 1–34 (MKSFKNKNTLRRKKAFPVFTKILLVSFLVWVLKC). Residue asparagine 42 is glycosylated (N-linked (GlcNAc...) asparagine). A compositionally biased stretch (basic residues) spans 57–87 (AQKQHEHHHHHHHQHQHQHQAPHQAHHHHHH). Disordered regions lie at residues 57–143 (AQKQ…QVFR) and 347–634 (SSVN…GCCG). Low complexity predominate over residues 95-104 (PQVHQQVHGQ). The segment covering 108–117 (HHHHHHHHHQ) has biased composition (basic residues). 2 stretches are compositionally biased toward basic and acidic residues: residues 354–375 (KHGD…EGEK) and 396–405 (KDNEDAESVK). Basic residues predominate over residues 406–422 (SKKHKSHDCEKKKSKKH). Composition is skewed to basic and acidic residues over residues 423–444 (KDNE…GEKH) and 453–493 (KTNE…KKVD). Residues 494–505 (STSADNKSTNAA) show a composition bias toward polar residues. A compositionally biased stretch (basic and acidic residues) spans 509–520 (AKDKTQGGKTDK). 4 repeat units span residues 540–549 (TKGATKEAST), 550–559 (SKEATKEAST), 560–569 (SKGATKEAST), and 570–579 (TEGATKGAST). The tract at residues 540-580 (TKGATKEASTSKEATKEASTSKGATKEASTTEGATKGASTT) is 4 X 10 AA tandem repeats of [TS]-[KE]-[GE]-A-T-K-[EG]-A-S-T. Over residues 567-591 (ASTTEGATKGASTTAGSTTGATTGA) the composition is skewed to low complexity. Over residues 605–620 (AANNGEQVMSRGQAQL) the composition is skewed to polar residues. A compositionally biased stretch (basic residues) spans 625–634 (KKKKKRGCCG).

The protein localises to the secreted. Functionally, KAHRP might mimick human histidine-rich glycoproteins to anchor host thrombospondin or a parasite analog in a binding complex with the endothelial cell receptor. The protein is Knob-associated histidine-rich protein of Plasmodium falciparum (isolate FCR-3 / Gambia).